Here is a 503-residue protein sequence, read N- to C-terminus: GMP synthase [glutamine-hydrolyzing] (503 aa).

Residues Pro3–Asn189 enclose the Glutamine amidotransferase type-1 domain. Cys80 functions as the Nucleophile in the catalytic mechanism. Active-site residues include His165 and Glu167. A GMPS ATP-PPase domain is found at Trp190–Arg380. An ATP-binding site is contributed by Ser217–Val223.

Homodimer.

The catalysed reaction is XMP + L-glutamine + ATP + H2O = GMP + L-glutamate + AMP + diphosphate + 2 H(+). Its pathway is purine metabolism; GMP biosynthesis; GMP from XMP (L-Gln route): step 1/1. Functionally, catalyzes the synthesis of GMP from XMP. This is GMP synthase [glutamine-hydrolyzing] from Tropheryma whipplei (strain TW08/27) (Whipple's bacillus).